A 218-amino-acid polypeptide reads, in one-letter code: MAMEVKICGLRHPAQAQAIAALGFTTLGFICVEASSRYVSSREIELVLQSLTAHNKRSAIGVFANVSLPKLGEFLAQTSLNGIQLHGDESPDFCRQVKQAFPQHRLIKALRLRRSADLERAEAYYNAVDVLLLDAYHPEQLGGTGQTLPWQKLQQFRPPLPWWLAGGLTPSNVQEALNLLQPDGIDLSSGVEQGPADKDVAKVAQLRAQLDALAILQH.

Belongs to the TrpF family.

The catalysed reaction is N-(5-phospho-beta-D-ribosyl)anthranilate = 1-(2-carboxyphenylamino)-1-deoxy-D-ribulose 5-phosphate. Its pathway is amino-acid biosynthesis; L-tryptophan biosynthesis; L-tryptophan from chorismate: step 3/5. This is N-(5'-phosphoribosyl)anthranilate isomerase (trpF) from Synechocystis sp. (strain ATCC 27184 / PCC 6803 / Kazusa).